The following is a 176-amino-acid chain: uncharacterized protein (176 aa).

The N-terminal stretch at 1-20 is a signal peptide; that stretch reads MIKKISIILITLFIIQLTKS. The interval 26-46 is disordered; it reads NNNNNNNNNNNNNNNNNNNNN. A glycan (N-linked (GlcNAc...) asparagine) is linked at Asn120.

The protein belongs to the Dictyostelium gerABC family.

It is found in the secreted. This is an uncharacterized protein from Dictyostelium discoideum (Social amoeba).